A 317-amino-acid chain; its full sequence is Acetyl-coenzyme A carboxylase carboxyl transferase subunit alpha (317 aa).

The 262-residue stretch at 33-294 (NLDDEIARLQ…KQRLLEDLAD (262 aa)) folds into the CoA carboxyltransferase C-terminal domain.

The protein belongs to the AccA family. In terms of assembly, acetyl-CoA carboxylase is a heterohexamer composed of biotin carboxyl carrier protein (AccB), biotin carboxylase (AccC) and two subunits each of ACCase subunit alpha (AccA) and ACCase subunit beta (AccD).

The protein resides in the cytoplasm. It catalyses the reaction N(6)-carboxybiotinyl-L-lysyl-[protein] + acetyl-CoA = N(6)-biotinyl-L-lysyl-[protein] + malonyl-CoA. Its pathway is lipid metabolism; malonyl-CoA biosynthesis; malonyl-CoA from acetyl-CoA: step 1/1. Its function is as follows. Component of the acetyl coenzyme A carboxylase (ACC) complex. First, biotin carboxylase catalyzes the carboxylation of biotin on its carrier protein (BCCP) and then the CO(2) group is transferred by the carboxyltransferase to acetyl-CoA to form malonyl-CoA. This is Acetyl-coenzyme A carboxylase carboxyl transferase subunit alpha from Glaesserella parasuis serovar 5 (strain SH0165) (Haemophilus parasuis).